Reading from the N-terminus, the 161-residue chain is uncharacterized protein (161 aa).

It belongs to the SixA phosphatase family.

This is an uncharacterized protein from Mycobacterium leprae (strain TN).